We begin with the raw amino-acid sequence, 211 residues long: MRPTLGLFGGTFDPIHIGHLRLALELKQQLQLDGMRLMPCHLPAHRDQPGASSTQRATMLQLALAACPELSIDLREVARARASYTVDSLSELRAELGAETSLVFCLGTDSFAGLDRWHRWQELLQLAHLVVVERPGWDIPSTGPVRTLLAQHQGAPGQLRLAACGSIVRLAPRLLPISATEIRQLIGAGQSPQFLVPDSVWQYIGQERLYR.

Belongs to the NadD family.

The enzyme catalyses nicotinate beta-D-ribonucleotide + ATP + H(+) = deamido-NAD(+) + diphosphate. The protein operates within cofactor biosynthesis; NAD(+) biosynthesis; deamido-NAD(+) from nicotinate D-ribonucleotide: step 1/1. Functionally, catalyzes the reversible adenylation of nicotinate mononucleotide (NaMN) to nicotinic acid adenine dinucleotide (NaAD). In Cellvibrio japonicus (strain Ueda107) (Pseudomonas fluorescens subsp. cellulosa), this protein is Probable nicotinate-nucleotide adenylyltransferase.